Reading from the N-terminus, the 473-residue chain is Tyrosine phenol-lyase (473 aa).

Position 257 is an N6-(pyridoxal phosphate)lysine (Lys-257).

It belongs to the beta-eliminating lyase family. Homotetramer. Pyridoxal 5'-phosphate is required as a cofactor.

The enzyme catalyses L-tyrosine + H2O = phenol + pyruvate + NH4(+). The sequence is that of Tyrosine phenol-lyase from Intrasporangium calvum (strain ATCC 23552 / DSM 43043 / JCM 3097 / NBRC 12989 / NCIMB 10167 / NRRL B-3866 / 7 KIP).